The sequence spans 267 residues: Auxin-responsive protein IAA18 (267 aa).

The short motif at 42–46 (LELKL) is the EAR-like (transcriptional repression) element. A disordered region spans residues 81 to 101 (PSSTKTTSHKRTAPGPVVGWP). A PB1 domain is found at 149–248 (GMFVKINMYG…SVKRLRVIKT (100 aa)).

It belongs to the Aux/IAA family. Homodimers and heterodimers. Interacts with TPL.

Its subcellular location is the nucleus. Its function is as follows. Aux/IAA proteins are short-lived transcriptional factors that function as repressors of early auxin response genes at low auxin concentrations. Repression is thought to result from the interaction with auxin response factors (ARFs), proteins that bind to the auxin-responsive promoter element (AuxRE). Formation of heterodimers with ARF proteins may alter their ability to modulate early auxin response genes expression. In Arabidopsis thaliana (Mouse-ear cress), this protein is Auxin-responsive protein IAA18 (IAA18).